We begin with the raw amino-acid sequence, 124 residues long: Snake venom vascular endothelial growth factor toxin apiscin (124 aa).

Positions 1–24 (MAAYLLAVAILFCIQGWPSGTVQG) are cleaved as a signal peptide. Position 25 is a pyrrolidone carboxylic acid (Q25). 3 disulfides stabilise this stretch: C38–C80, C69–C115, and C73–C117.

This sequence belongs to the PDGF/VEGF growth factor family. Snake venom VEGF subfamily. As to quaternary structure, homodimer; disulfide-linked. Interacts with VEGF receptor-1 (FLT1) with a high affinity, whereas it binds to VEGF receptor-2 (KDR) with a low affinity. Does not bind VEGF receptor-3 (FLT4). Expressed by the venom gland.

The protein resides in the secreted. Its function is as follows. Snake venom VEGFs that may contribute to venom dispersion and prey subjugation by inducing vascular permeability and hypotension. This protein induces an increase in capillary permeability after intradermal injection, as well as a drastic hypotensive effect after intravenous injection. The hypotension is mediated by nitric oxide (NO), which is produced by VEGF-activated endothelium NO synthase. Also induces angiogenesis in vitro. Like other crotalid VEGFs, this protein interacts with VEGF receptor-1 (FLT1) with a high affinity, whereas it binds to VEGF receptor-2 (KDR) with a low affinity. The protein is Snake venom vascular endothelial growth factor toxin apiscin of Agkistrodon piscivorus piscivorus (Eastern cottonmouth).